A 551-amino-acid polypeptide reads, in one-letter code: Malate synthase, glyoxysomal (551 aa).

R174 functions as the Proton acceptor in the catalytic mechanism. The active-site Proton donor is D458.

It belongs to the malate synthase family.

The protein resides in the glyoxysome. It carries out the reaction glyoxylate + acetyl-CoA + H2O = (S)-malate + CoA + H(+). It participates in carbohydrate metabolism; glyoxylate cycle; (S)-malate from isocitrate: step 2/2. The sequence is that of Malate synthase, glyoxysomal (PMS1) from Candida tropicalis (Yeast).